Reading from the N-terminus, the 920-residue chain is Plasma membrane ATPase (920 aa).

The interval 1 to 77 (MADHSASGAP…TPGGGRVVPE (77 aa)) is disordered. Topologically, residues 1-115 (MADHSASGAP…KEEKENHFLK (115 aa)) are cytoplasmic. Residues 38-51 (EDDEDEDIDALIED) are compositionally biased toward acidic residues. The chain crosses the membrane as a helical span at residues 116 to 138 (FLGFFVGPIQFVMEGAAVLAAGL). Residues 139–140 (ED) lie on the Extracellular side of the membrane. A helical membrane pass occupies residues 141 to 160 (WVDFGVICGLLLLNAVVGFV). At 161–291 (QEFQAGSIVD…GSGHFTEVLN (131 aa)) the chain is on the cytoplasmic side. A helical transmembrane segment spans residues 292 to 314 (GIGTILLILVIFTLLIVWVSSFY). Residues 315–321 (RSNPIVQ) lie on the Extracellular side of the membrane. Residues 322–354 (ILEFTLAITIIGVPVGLPAVVTTTMAVGAAYLA) traverse the membrane as a helical segment. Residues 355-687 (KKKAIVQKLS…LKTSRQIFHR (333 aa)) lie on the Cytoplasmic side of the membrane. The 4-aspartylphosphate intermediate role is filled by D378. The Mg(2+) site is built by D634 and D638. The helical transmembrane segment at 688 to 713 (MYAYVVYRIALSIHLEIFLGLWIAIL) threads the bilayer. Topologically, residues 714 to 720 (NRSLNIE) are extracellular. Residues 721–738 (LVVFIAIFADVATLAIAY) form a helical membrane-spanning segment. Over 739–754 (DNAPYSQTPVKWNLPK) the chain is Cytoplasmic. The helical transmembrane segment at 755 to 779 (LWGMSVLLGVVLAVGTWITVTTMYA) threads the bilayer. Over 780–806 (QGENGGIVQNFGNMDEVLFLQISLTEN) the chain is Extracellular. 2 helical membrane-spanning segments follow: residues 807-826 (WLIF…PSWQ) and 827-847 (LSGA…WGWF). Topologically, residues 848-853 (EHSDTS) are extracellular. A helical transmembrane segment spans residues 854-878 (IVAVVRIWIFSFGIFCIMGGVYYIL). The Cytoplasmic portion of the chain corresponds to 879-920 (QDSVGFDNLMHGKSPKGNQKQRSLEDFVVSLQRVSTQHEKSQ).

This sequence belongs to the cation transport ATPase (P-type) (TC 3.A.3) family. Type IIIA subfamily.

The protein localises to the cell membrane. It catalyses the reaction ATP + H2O + H(+)(in) = ADP + phosphate + 2 H(+)(out). In terms of biological role, the plasma membrane ATPase of plants and fungi is a hydrogen ion pump. The proton gradient it generates drives the active transport of nutrients by H(+)-symport. The resulting external acidification and/or internal alkinization may mediate growth responses. This is Plasma membrane ATPase (pma-1) from Neurospora crassa (strain ATCC 24698 / 74-OR23-1A / CBS 708.71 / DSM 1257 / FGSC 987).